Reading from the N-terminus, the 94-residue chain is Co-chaperonin GroES (94 aa).

The protein belongs to the GroES chaperonin family. As to quaternary structure, heptamer of 7 subunits arranged in a ring. Interacts with the chaperonin GroEL.

It localises to the cytoplasm. Functionally, together with the chaperonin GroEL, plays an essential role in assisting protein folding. The GroEL-GroES system forms a nano-cage that allows encapsulation of the non-native substrate proteins and provides a physical environment optimized to promote and accelerate protein folding. GroES binds to the apical surface of the GroEL ring, thereby capping the opening of the GroEL channel. This is Co-chaperonin GroES from Streptococcus equinus (Streptococcus bovis).